Consider the following 174-residue polypeptide: Micrococcal nuclease (174 aa).

An N-terminal signal peptide occupies residues 1 to 23; the sequence is MKSALAALRAVAAAVVLIVSVPA. Catalysis depends on residues R52, E60, and R94.

It belongs to the thermonuclease family.

It catalyses the reaction Endonucleolytic cleavage to nucleoside 3'-phosphates and 3'-phosphooligonucleotide end-products.. In Shigella flexneri, this protein is Micrococcal nuclease (nuc).